A 91-amino-acid chain; its full sequence is UPF0512 protein E (91 aa).

The segment covering 1-25 (MAIFKSISSISNSTSAMGSSNSTSN) has biased composition (low complexity). Positions 1–26 (MAIFKSISSISNSTSAMGSSNSTSNR) are disordered.

The protein belongs to the UPF0512 family.

This is UPF0512 protein E from Dictyostelium discoideum (Social amoeba).